The sequence spans 556 residues: Endonuclease/exonuclease/phosphatase family domain-containing protein 1 (556 aa).

Residues 39 to 68 enclose the HhH domain; sequence ERLNINTATEEELMTLPGVTRQVAQNIVEY.

The polypeptide is Endonuclease/exonuclease/phosphatase family domain-containing protein 1 (eepd1) (Xenopus laevis (African clawed frog)).